The chain runs to 392 residues: Succinyl-diaminopimelate desuccinylase (392 aa).

His-75 contacts Zn(2+). Residue Asp-77 is part of the active site. Asp-108 contributes to the Zn(2+) binding site. Glu-147 functions as the Proton acceptor in the catalytic mechanism. Residues Glu-148, Glu-176, and His-365 each coordinate Zn(2+).

This sequence belongs to the peptidase M20A family. DapE subfamily. Homodimer. Zn(2+) is required as a cofactor. The cofactor is Co(2+).

It carries out the reaction N-succinyl-(2S,6S)-2,6-diaminopimelate + H2O = (2S,6S)-2,6-diaminopimelate + succinate. The protein operates within amino-acid biosynthesis; L-lysine biosynthesis via DAP pathway; LL-2,6-diaminopimelate from (S)-tetrahydrodipicolinate (succinylase route): step 3/3. In terms of biological role, catalyzes the hydrolysis of N-succinyl-L,L-diaminopimelic acid (SDAP), forming succinate and LL-2,6-diaminopimelate (DAP), an intermediate involved in the bacterial biosynthesis of lysine and meso-diaminopimelic acid, an essential component of bacterial cell walls. This is Succinyl-diaminopimelate desuccinylase from Rhodopseudomonas palustris (strain BisB18).